The sequence spans 284 residues: RNase adapter protein RapZ (284 aa).

8-15 (GRSGSGKS) provides a ligand contact to ATP. 56 to 59 (DVRN) lines the GTP pocket. The segment at 266 to 284 (RSRGKNAQSRHRTLEKSKS) is RNA-binding.

Belongs to the RapZ-like family. RapZ subfamily. In terms of assembly, homotrimer.

In terms of biological role, modulates the synthesis of GlmS, by affecting the processing and stability of the regulatory small RNA GlmZ. When glucosamine-6-phosphate (GlcN6P) concentrations are high in the cell, RapZ binds GlmZ and targets it to cleavage by RNase E. Consequently, GlmZ is inactivated and unable to activate GlmS synthesis. Under low GlcN6P concentrations, RapZ is sequestered and inactivated by an other regulatory small RNA, GlmY, preventing GlmZ degradation and leading to synthesis of GlmS. This Sodalis glossinidius (strain morsitans) protein is RNase adapter protein RapZ.